A 498-amino-acid polypeptide reads, in one-letter code: ATP synthase subunit beta, chloroplastic (498 aa).

Position 172 to 179 (172 to 179 (GGAGVGKT)) interacts with ATP.

Belongs to the ATPase alpha/beta chains family. F-type ATPases have 2 components, CF(1) - the catalytic core - and CF(0) - the membrane proton channel. CF(1) has five subunits: alpha(3), beta(3), gamma(1), delta(1), epsilon(1). CF(0) has four main subunits: a(1), b(1), b'(1) and c(9-12).

It localises to the plastid. The protein resides in the chloroplast thylakoid membrane. It catalyses the reaction ATP + H2O + 4 H(+)(in) = ADP + phosphate + 5 H(+)(out). Produces ATP from ADP in the presence of a proton gradient across the membrane. The catalytic sites are hosted primarily by the beta subunits. This Citrus sinensis (Sweet orange) protein is ATP synthase subunit beta, chloroplastic.